We begin with the raw amino-acid sequence, 130 residues long: Chaperone protein SycT (130 aa).

As to quaternary structure, binds to YopT.

Functionally, functions as a specific chaperone for YopT. This is Chaperone protein SycT (sycT) from Yersinia enterocolitica.